Here is a 259-residue protein sequence, read N- to C-terminus: 3-dehydroquinate dehydratase (259 aa).

Residues glutamate 50–arginine 52 and arginine 86 contribute to the 3-dehydroquinate site. The active-site Proton donor/acceptor is histidine 147. Lysine 174 serves as the catalytic Schiff-base intermediate with substrate. Arginine 216, serine 235, and glutamine 239 together coordinate 3-dehydroquinate.

Belongs to the type-I 3-dehydroquinase family. Homodimer.

It catalyses the reaction 3-dehydroquinate = 3-dehydroshikimate + H2O. It functions in the pathway metabolic intermediate biosynthesis; chorismate biosynthesis; chorismate from D-erythrose 4-phosphate and phosphoenolpyruvate: step 3/7. Involved in the third step of the chorismate pathway, which leads to the biosynthesis of aromatic amino acids. Catalyzes the cis-dehydration of 3-dehydroquinate (DHQ) and introduces the first double bond of the aromatic ring to yield 3-dehydroshikimate. In Geobacillus sp. (strain WCH70), this protein is 3-dehydroquinate dehydratase.